We begin with the raw amino-acid sequence, 527 residues long: MAGATSATAAAGAFAAAKARGPAAACPWLVAAGGRRRSGVVRCDAGGDAQAASKAASITALEQFKISADRYMKEKSSIAVIGLSVHTAPVEMREKLAVAEELWPRAISELTSLNHIEEAAVLSTCNRMEIYVVALSWNRGIREVVDWMSKKSGIPASELREHLFMLRDSDATRHLFEVSAGLDSLVLGEGQILAQVKQVVRNGQNSGGLGKNIDRMFKDAITAGKRVRCETNISAGAVSVSSAAVELAMMKLPKSECLSARMLLIGAGKMGKLVVKHLIAKGCKKVVVVNRSVERVDAIREEMKDIEIVYRPLTEMYEAAADADVVFTSTASESLLFTKEHAEVLPPISLAMGGVRLFVDISVPRNVGACLSEVEHARVYNVDDLKEVVEANKEDRVRKAMEAQTIITQELKRFEAWRDSLETVPTIKKLRSYADRIRASELEKCLQKIGEDNLNKKMRRSIEELSTGIVNKLLHGPLQHLRCDGSDSRTLDETLENMHALNRMFSLDTEKAVLEQKIKAKVEKTQS.

The transit peptide at methionine 1–cysteine 43 directs the protein to the chloroplast. Residues threonine 124 to arginine 127, serine 184, glutamate 189 to glutamine 191, and glutamine 195 contribute to the substrate site. The active-site Nucleophile is cysteine 125. Glycine 266 to glycine 271 contributes to the NADP(+) binding site.

The protein belongs to the glutamyl-tRNA reductase family. Homodimer.

Its subcellular location is the plastid. It is found in the chloroplast. The catalysed reaction is (S)-4-amino-5-oxopentanoate + tRNA(Glu) + NADP(+) = L-glutamyl-tRNA(Glu) + NADPH + H(+). Its pathway is porphyrin-containing compound metabolism; protoporphyrin-IX biosynthesis; 5-aminolevulinate from L-glutamyl-tRNA(Glu): step 1/2. Functionally, catalyzes the NADPH-dependent reduction of glutamyl-tRNA(Glu) to glutamate 1-semialdehyde (GSA). The sequence is that of Glutamyl-tRNA reductase 1, chloroplastic (HEMA1) from Hordeum vulgare (Barley).